The following is a 169-amino-acid chain: Chorion protein E1 (169 aa).

A signal peptide spans 1–19 (MAWFTTVLIVASLLGSLVA). Tetradecapeptide repeat units lie at residues 114-127 (GAGRGAEMEGKPRS) and 128-141 (GAGKGAEMEGKPKS). Positions 119 to 169 (AEMEGKPRSGAGKGAEMEGKPKSTESVAETNTVAAGTGVVAEKTGTESSAS) are disordered. The segment covering 142 to 152 (TESVAETNTVA) has biased composition (polar residues).

Functionally, this protein is one of two components of the prominent 'filler' that helps mold the shape of aeropyle crowns. This Antheraea polyphemus (Polyphemus moth) protein is Chorion protein E1.